The primary structure comprises 316 residues: 4-hydroxy-3-methylbut-2-enyl diphosphate reductase (316 aa).

Residue Cys-12 coordinates [4Fe-4S] cluster. 2 residues coordinate (2E)-4-hydroxy-3-methylbut-2-enyl diphosphate: His-41 and His-74. Dimethylallyl diphosphate contacts are provided by His-41 and His-74. The isopentenyl diphosphate site is built by His-41 and His-74. A [4Fe-4S] cluster-binding site is contributed by Cys-96. His-124 provides a ligand contact to (2E)-4-hydroxy-3-methylbut-2-enyl diphosphate. His-124 serves as a coordination point for dimethylallyl diphosphate. An isopentenyl diphosphate-binding site is contributed by His-124. Glu-126 functions as the Proton donor in the catalytic mechanism. Thr-168 lines the (2E)-4-hydroxy-3-methylbut-2-enyl diphosphate pocket. Cys-198 lines the [4Fe-4S] cluster pocket. (2E)-4-hydroxy-3-methylbut-2-enyl diphosphate contacts are provided by Ser-226, Ser-227, Asn-228, and Ser-270. Residues Ser-226, Ser-227, Asn-228, and Ser-270 each contribute to the dimethylallyl diphosphate site. Ser-226, Ser-227, Asn-228, and Ser-270 together coordinate isopentenyl diphosphate.

Belongs to the IspH family. Requires [4Fe-4S] cluster as cofactor.

It catalyses the reaction isopentenyl diphosphate + 2 oxidized [2Fe-2S]-[ferredoxin] + H2O = (2E)-4-hydroxy-3-methylbut-2-enyl diphosphate + 2 reduced [2Fe-2S]-[ferredoxin] + 2 H(+). The catalysed reaction is dimethylallyl diphosphate + 2 oxidized [2Fe-2S]-[ferredoxin] + H2O = (2E)-4-hydroxy-3-methylbut-2-enyl diphosphate + 2 reduced [2Fe-2S]-[ferredoxin] + 2 H(+). Its pathway is isoprenoid biosynthesis; dimethylallyl diphosphate biosynthesis; dimethylallyl diphosphate from (2E)-4-hydroxy-3-methylbutenyl diphosphate: step 1/1. The protein operates within isoprenoid biosynthesis; isopentenyl diphosphate biosynthesis via DXP pathway; isopentenyl diphosphate from 1-deoxy-D-xylulose 5-phosphate: step 6/6. Catalyzes the conversion of 1-hydroxy-2-methyl-2-(E)-butenyl 4-diphosphate (HMBPP) into a mixture of isopentenyl diphosphate (IPP) and dimethylallyl diphosphate (DMAPP). Acts in the terminal step of the DOXP/MEP pathway for isoprenoid precursor biosynthesis. The chain is 4-hydroxy-3-methylbut-2-enyl diphosphate reductase from Marinobacter nauticus (strain ATCC 700491 / DSM 11845 / VT8) (Marinobacter aquaeolei).